The sequence spans 64 residues: Large ribosomal subunit protein bL35 (64 aa).

Residues 1-44 are compositionally biased toward basic residues; that stretch reads MSKIKSHSGAAKRFKRTANGFKHKQSHTSHILTKKSTKRKRHLR. The disordered stretch occupies residues 1–48; it reads MSKIKSHSGAAKRFKRTANGFKHKQSHTSHILTKKSTKRKRHLRSMNQ.

This sequence belongs to the bacterial ribosomal protein bL35 family.

The sequence is that of Large ribosomal subunit protein bL35 from Marinomonas sp. (strain MWYL1).